The chain runs to 503 residues: Glycerol kinase (503 aa).

Thr-14 contacts ADP. 3 residues coordinate ATP: Thr-14, Thr-15, and Ser-16. Thr-14 lines the sn-glycerol 3-phosphate pocket. Position 18 (Arg-18) interacts with ADP. Arg-84, Glu-85, Tyr-136, and Asp-246 together coordinate sn-glycerol 3-phosphate. Residues Arg-84, Glu-85, Tyr-136, Asp-246, and Gln-247 each contribute to the glycerol site. ADP is bound by residues Thr-268 and Gly-311. ATP-binding residues include Thr-268, Gly-311, Gln-315, and Gly-412. Residues Gly-412 and Asn-416 each contribute to the ADP site.

This sequence belongs to the FGGY kinase family. Homotetramer and homodimer (in equilibrium). Heterodimer with EIIA-Glc. Binds 1 zinc ion per glycerol kinase EIIA-Glc dimer. The zinc ion is important for dimerization.

It catalyses the reaction glycerol + ATP = sn-glycerol 3-phosphate + ADP + H(+). It participates in polyol metabolism; glycerol degradation via glycerol kinase pathway; sn-glycerol 3-phosphate from glycerol: step 1/1. Its activity is regulated as follows. Activity of this regulatory enzyme is affected by several metabolites. Allosterically and non-competitively inhibited by fructose 1,6-bisphosphate (FBP) and unphosphorylated phosphocarrier protein EIIA-Glc (III-Glc), an integral component of the bacterial phosphotransferase (PTS) system. Its function is as follows. Key enzyme in the regulation of glycerol uptake and metabolism. Catalyzes the phosphorylation of glycerol to yield sn-glycerol 3-phosphate. The chain is Glycerol kinase from Klebsiella pneumoniae subsp. pneumoniae (strain ATCC 700721 / MGH 78578).